Consider the following 95-residue polypeptide: MSLDTKTIGKIAHLARLEFDDKSLEAFSTDFNKILSWIDKLNEVNTDNVEPLIHMSHELNVLREDIDKVTISHEEALKNAPKKDSDYFRVPKFLS.

It belongs to the GatC family. As to quaternary structure, heterotrimer of A, B and C subunits.

The catalysed reaction is L-glutamyl-tRNA(Gln) + L-glutamine + ATP + H2O = L-glutaminyl-tRNA(Gln) + L-glutamate + ADP + phosphate + H(+). The enzyme catalyses L-aspartyl-tRNA(Asn) + L-glutamine + ATP + H2O = L-asparaginyl-tRNA(Asn) + L-glutamate + ADP + phosphate + 2 H(+). Functionally, allows the formation of correctly charged Asn-tRNA(Asn) or Gln-tRNA(Gln) through the transamidation of misacylated Asp-tRNA(Asn) or Glu-tRNA(Gln) in organisms which lack either or both of asparaginyl-tRNA or glutaminyl-tRNA synthetases. The reaction takes place in the presence of glutamine and ATP through an activated phospho-Asp-tRNA(Asn) or phospho-Glu-tRNA(Gln). The chain is Aspartyl/glutamyl-tRNA(Asn/Gln) amidotransferase subunit C from Cytophaga hutchinsonii (strain ATCC 33406 / DSM 1761 / CIP 103989 / NBRC 15051 / NCIMB 9469 / D465).